The following is a 331-amino-acid chain: 6-phosphogluconolactonase (331 aa).

This sequence belongs to the cycloisomerase 2 family.

It carries out the reaction 6-phospho-D-glucono-1,5-lactone + H2O = 6-phospho-D-gluconate + H(+). Its pathway is carbohydrate degradation; pentose phosphate pathway; D-ribulose 5-phosphate from D-glucose 6-phosphate (oxidative stage): step 2/3. Functionally, catalyzes the hydrolysis of 6-phosphogluconolactone to 6-phosphogluconate. The chain is 6-phosphogluconolactonase from Serratia proteamaculans (strain 568).